A 353-amino-acid polypeptide reads, in one-letter code: S-adenosylmethionine:tRNA ribosyltransferase-isomerase (353 aa).

The protein belongs to the QueA family. In terms of assembly, monomer.

The protein resides in the cytoplasm. It catalyses the reaction 7-aminomethyl-7-carbaguanosine(34) in tRNA + S-adenosyl-L-methionine = epoxyqueuosine(34) in tRNA + adenine + L-methionine + 2 H(+). It participates in tRNA modification; tRNA-queuosine biosynthesis. In terms of biological role, transfers and isomerizes the ribose moiety from AdoMet to the 7-aminomethyl group of 7-deazaguanine (preQ1-tRNA) to give epoxyqueuosine (oQ-tRNA). The polypeptide is S-adenosylmethionine:tRNA ribosyltransferase-isomerase (Baumannia cicadellinicola subsp. Homalodisca coagulata).